We begin with the raw amino-acid sequence, 291 residues long: MIRNSKILMNKLKRIGLGQITSTNNKEDNFRKCKEMIEKAVENKVNLFCLPECFAFISGGIHQFESRDNAEYLDQKGGIIERYKDLAKQNNIWLSLGGFHEKILDDPNDMIYNTHLIIDSNGVIVCEYRKMHLFDVDIPSKGVKMNESKVVKGGNDLVVCDSPVGKLGLSICYDLRFPELYLSLRRMDAQILLVPSAFMKSTGEAHWKPLLQARAIENQTYVIAAAQTGDHHSKRSSYGHSMIIDPWGKVLHDLPDNLNDIAFVDIDLDYISTCRENIPVFNHKKLNNYKI.

The CN hydrolase domain occupies 13 to 268; it reads KRIGLGQITS…NDIAFVDIDL (256 aa). Glutamate 52 serves as the catalytic Proton acceptor. Lysine 130 (proton donor) is an active-site residue. Cysteine 172 (nucleophile) is an active-site residue.

The protein belongs to the carbon-nitrogen hydrolase superfamily. NIT1/NIT2 family.

The catalysed reaction is N-(4-oxoglutaryl)-L-cysteinylglycine + H2O = L-cysteinylglycine + 2-oxoglutarate. Its function is as follows. Catalyzes the hydrolysis of the amide bond in N-(4-oxoglutarate)-L-cysteinylglycine (deaminated glutathione), a metabolite repair reaction to dispose of the harmful deaminated glutathione. This Dictyostelium discoideum (Social amoeba) protein is Deaminated glutathione amidase (nit1-1).